The following is a 175-amino-acid chain: Shikimate kinase (175 aa).

An ATP-binding site is contributed by 11 to 16 (GAGKTT). Thr15 serves as a coordination point for Mg(2+). Positions 33, 57, and 79 each coordinate substrate. Arg118 is a binding site for ATP. Residue Arg140 participates in substrate binding.

It belongs to the shikimate kinase family. Monomer. The cofactor is Mg(2+).

Its subcellular location is the cytoplasm. It catalyses the reaction shikimate + ATP = 3-phosphoshikimate + ADP + H(+). It participates in metabolic intermediate biosynthesis; chorismate biosynthesis; chorismate from D-erythrose 4-phosphate and phosphoenolpyruvate: step 5/7. Its function is as follows. Catalyzes the specific phosphorylation of the 3-hydroxyl group of shikimic acid using ATP as a cosubstrate. The protein is Shikimate kinase of Phocaeicola vulgatus (strain ATCC 8482 / DSM 1447 / JCM 5826 / CCUG 4940 / NBRC 14291 / NCTC 11154) (Bacteroides vulgatus).